The following is a 140-amino-acid chain: Thioredoxin M-type, chloroplastic (140 aa).

A chloroplast-targeting transit peptide spans 1-34; it reads MALVARRAAVPSARSSARPAFARAAPRRSVVVRA. In terms of domain architecture, Thioredoxin spans 35–140; it reads EAGAVNDDTF…IVQTVEKYLN (106 aa). Active-site nucleophile residues include Cys64 and Cys67. A disulfide bond links Cys64 and Cys67.

Belongs to the thioredoxin family. Plant M-type subfamily. Forms a complex with heterodimeric ferredoxin-thioredoxin reductase (FTR) and ferredoxin.

It localises to the plastid. It is found in the chloroplast. Functionally, participates in various redox reactions through the reversible oxidation of the active center dithiol to a disulfide. The M form is known to activate NADP-malate dehydrogenase. This Chlamydomonas reinhardtii (Chlamydomonas smithii) protein is Thioredoxin M-type, chloroplastic (TRXM).